The following is a 1047-amino-acid chain: Atrial natriuretic peptide receptor 2 (1047 aa).

The first 16 residues, 1-16 (MALPSLLLVVAALAGG), serve as a signal peptide directing secretion. The Extracellular segment spans residues 17–458 (VRPPGARNLT…DKTPLSTLAI (442 aa)). Asn24 and Asn35 each carry an N-linked (GlcNAc...) asparagine glycan. Cys75 and Cys101 are oxidised to a cystine. Residues Asn161, Asn195, Asn244, Asn277, and Asn349 are each glycosylated (N-linked (GlcNAc...) asparagine). The chain crosses the membrane as a helical span at residues 459-478 (VALGTGITFIMFGVSSFLIF). At 479–1047 (RKLMLEKELA…GERKGPAGLL (569 aa)) the chain is on the cytoplasmic side. Ser513 is modified (phosphoserine). One can recognise a Protein kinase domain in the interval 513–786 (SRLTLSLRGS…PDFGQIKGFI (274 aa)). Thr516 carries the post-translational modification Phosphothreonine. Residues Ser518, Ser522, Ser523, and Ser526 each carry the phosphoserine modification. Thr529 is modified (phosphothreonine). Positions 861 to 991 (TIYFSDIVGF…DTVNTASRME (131 aa)) constitute a Guanylate cyclase domain.

It belongs to the adenylyl cyclase class-4/guanylyl cyclase family. Post-translationally, phosphorylated. Phosphorylation of the protein kinase-like domain is required for full activation by CNP. Glycosylated.

The protein localises to the cell membrane. The enzyme catalyses GTP = 3',5'-cyclic GMP + diphosphate. In terms of biological role, receptor for the C-type natriuretic peptide NPPC/CNP hormone. Has guanylate cyclase activity upon binding of its ligand. May play a role in the regulation of skeletal growth. This Bos taurus (Bovine) protein is Atrial natriuretic peptide receptor 2 (NPR2).